The primary structure comprises 387 residues: Migration and invasion-inhibitory protein (387 aa).

Residues 50 to 59 (NLEMPLSQET) show a composition bias toward polar residues. Disordered stretches follow at residues 50–80 (NLEM…DPLD) and 133–172 (VSLG…SAVP). The span at 60–69 (SSASSVAPSS) shows a compositional bias: low complexity. Basic and acidic residues predominate over residues 70–80 (QDKRHMLDPLD). Ser307 is modified (phosphoserine).

Interacts with IGFBP2.

Functionally, inhibits glioma cells invasion and down-regulates adhesion- and motility-associated genes such as NFKB2 and ICAM1. Exhibits opposing effects to IGFBP2 on cell invasion. The sequence is that of Migration and invasion-inhibitory protein (Miip) from Mus musculus (Mouse).